The sequence spans 374 residues: 5-methylthioribulose-1-phosphate isomerase (374 aa).

It belongs to the RuBisCO large chain family. Type IV subfamily.

It catalyses the reaction 5-(methylsulfanyl)-D-ribulose 1-phosphate = S-methyl-1-thio-D-xylulose 5-phosphate. It carries out the reaction 5-(methylsulfanyl)-D-ribulose 1-phosphate = 1-(methylsulfanyl)ribulose 5-phosphate. It functions in the pathway amino-acid biosynthesis; L-methionine biosynthesis via salvage pathway. It participates in metabolic intermediate biosynthesis; 1-deoxy-D-xylulose 5-phosphate biosynthesis. Catalyzes the conversion of 5-methylthio-D-ribulose 1-phosphate (MTRu-1P) to a 3:1 mixture of 1-methylthioxylulose 5-phosphate (MTXu-5P) and 1-methylthioribulose 5-phosphate (MTRu-5P). Involved in the MTA-isoprenoid shunt of the methionine salvage pathway. The chain is 5-methylthioribulose-1-phosphate isomerase from Rhodospirillum rubrum (strain ATCC 11170 / ATH 1.1.1 / DSM 467 / LMG 4362 / NCIMB 8255 / S1).